The chain runs to 239 residues: Fibroblast growth factor 3 (239 aa).

Residues 1-17 (MGLIWLLLLSLLEPGWP) form the signal peptide. Asparagine 65 carries an N-linked (GlcNAc...) asparagine glycan. The tract at residues 193–239 (QLQSGLPRPPGKGVQPRRRRQKQSPDNLEPSHVQASRLGSQLEASAH) is disordered. A compositionally biased stretch (polar residues) spans 225 to 239 (VQASRLGSQLEASAH).

The protein belongs to the heparin-binding growth factors family. In terms of assembly, interacts with FGFR1 and FGFR2. Affinity between fibroblast growth factors (FGFs) and their receptors is increased by heparan sulfate glycosaminoglycans that function as coreceptors.

It is found in the secreted. Plays an important role in the regulation of embryonic development, cell proliferation, and cell differentiation. Required for normal ear development. This Homo sapiens (Human) protein is Fibroblast growth factor 3 (FGF3).